Reading from the N-terminus, the 140-residue chain is MSKRGRGGSSGAKFRISLGLPVGAVINCADNTGAKNLYIISVKGIKGRLNRLPAAGVGDMVMATVKKGKPELRKKVHPAVVIRQRKSYRRKDGVFLYFEDNAGVIVNNKGEMKGSAITGPVAKECADLWPRIASNAGSIA.

Belongs to the universal ribosomal protein uL14 family. Component of the large ribosomal subunit.

The protein resides in the cytoplasm. Its function is as follows. Component of the large ribosomal subunit. The ribosome is a large ribonucleoprotein complex responsible for the synthesis of proteins in the cell. The polypeptide is Large ribosomal subunit protein uL14 (rpl23) (Ictalurus punctatus (Channel catfish)).